The primary structure comprises 261 residues: Zinc import ATP-binding protein ZnuC (261 aa).

Positions 6–221 (IRLEKVAVRF…PAFVELFGNN (216 aa)) constitute an ABC transporter domain. 38–45 (GPNGAGKT) lines the ATP pocket.

Belongs to the ABC transporter superfamily. Zinc importer (TC 3.A.1.15.5) family. In terms of assembly, the complex is composed of two ATP-binding proteins (ZnuC), two transmembrane proteins (ZnuB) and a solute-binding protein (ZnuA).

It is found in the cell inner membrane. It carries out the reaction Zn(2+)(out) + ATP(in) + H2O(in) = Zn(2+)(in) + ADP(in) + phosphate(in) + H(+)(in). Its function is as follows. Part of the ABC transporter complex ZnuABC involved in zinc import. Responsible for energy coupling to the transport system. This is Zinc import ATP-binding protein ZnuC from Pseudomonas fluorescens (strain Pf0-1).